We begin with the raw amino-acid sequence, 248 residues long: Homeobox-leucine zipper protein HOX15 (248 aa).

The tract at residues 1–44 (MAQDDEDVGLALGLSLGSGGHRRQRESRDEAPSSAAASLLTLRL) is disordered. The segment covering 32–44 (PSSAAASLLTLRL) has biased composition (low complexity). The segment at residues 91–150 (NSRKKLRLSKEQSALLEDRFKEHSTLNPKQKVALAKQLNLRPRQVEVWFQNRRARTKLKQ) is a DNA-binding region (homeobox). Positions 149–193 (KQTEVDCELLKRCCETLTEENRRLHRELQQLRALTHSTAAGFFMA) are leucine-zipper. Residues 223-248 (PTAAADRTNKPTAPHLFSPFAKSAAC) form a disordered region.

Belongs to the HD-ZIP homeobox family. Class II subfamily. Expressed in seedlings, stems, leaf blades and panicles.

The protein localises to the nucleus. Probable transcription factor. The polypeptide is Homeobox-leucine zipper protein HOX15 (HOX15) (Oryza sativa subsp. indica (Rice)).